A 322-amino-acid polypeptide reads, in one-letter code: Acetyl-coenzyme A carboxylase carboxyl transferase subunit alpha (322 aa).

The CoA carboxyltransferase C-terminal domain occupies 39 to 293 (RLAAKSQQLT…KRALAESLRQ (255 aa)).

It belongs to the AccA family. Acetyl-CoA carboxylase is a heterohexamer composed of biotin carboxyl carrier protein (AccB), biotin carboxylase (AccC) and two subunits each of ACCase subunit alpha (AccA) and ACCase subunit beta (AccD).

Its subcellular location is the cytoplasm. The enzyme catalyses N(6)-carboxybiotinyl-L-lysyl-[protein] + acetyl-CoA = N(6)-biotinyl-L-lysyl-[protein] + malonyl-CoA. It participates in lipid metabolism; malonyl-CoA biosynthesis; malonyl-CoA from acetyl-CoA: step 1/1. Component of the acetyl coenzyme A carboxylase (ACC) complex. First, biotin carboxylase catalyzes the carboxylation of biotin on its carrier protein (BCCP) and then the CO(2) group is transferred by the carboxyltransferase to acetyl-CoA to form malonyl-CoA. This is Acetyl-coenzyme A carboxylase carboxyl transferase subunit alpha from Ralstonia nicotianae (strain ATCC BAA-1114 / GMI1000) (Ralstonia solanacearum).